The sequence spans 113 residues: MNHYETVFILNPVLSETQVKETVSKFEDYLTSKGATMVSKEDWGLKKMAYEIQNKKSGFYHLFEFTVPGEVLIGFETEFRRDERVMRFLTVSLDKHAISWAERRRAKLKATKA.

Belongs to the bacterial ribosomal protein bS6 family.

Functionally, binds together with bS18 to 16S ribosomal RNA. This is Small ribosomal subunit protein bS6 from Flavobacterium psychrophilum (strain ATCC 49511 / DSM 21280 / CIP 103535 / JIP02/86).